Reading from the N-terminus, the 465-residue chain is ATP synthase subunit beta 2 (465 aa).

Residue 148–155 (GGAGVGKT) coordinates ATP.

This sequence belongs to the ATPase alpha/beta chains family. In terms of assembly, F-type ATPases have 2 components, CF(1) - the catalytic core - and CF(0) - the membrane proton channel. CF(1) has five subunits: alpha(3), beta(3), gamma(1), delta(1), epsilon(1). CF(0) has three main subunits: a(1), b(2) and c(9-12). The alpha and beta chains form an alternating ring which encloses part of the gamma chain. CF(1) is attached to CF(0) by a central stalk formed by the gamma and epsilon chains, while a peripheral stalk is formed by the delta and b chains.

It is found in the cell inner membrane. It catalyses the reaction ATP + H2O + 4 H(+)(in) = ADP + phosphate + 5 H(+)(out). Its function is as follows. Produces ATP from ADP in the presence of a proton gradient across the membrane. The catalytic sites are hosted primarily by the beta subunits. This Psychromonas ingrahamii (strain DSM 17664 / CCUG 51855 / 37) protein is ATP synthase subunit beta 2.